A 448-amino-acid chain; its full sequence is Mitochondrial distribution and morphology protein 10 (448 aa).

This sequence belongs to the MDM10 family. In terms of assembly, component of the ER-mitochondria encounter structure (ERMES) or MDM complex, composed of MMM1, MDM10, MDM12 and MDM34. Associates with the mitochondrial outer membrane sorting assembly machinery SAM(core) complex.

The protein localises to the mitochondrion outer membrane. Component of the ERMES/MDM complex, which serves as a molecular tether to connect the endoplasmic reticulum and mitochondria. Components of this complex are involved in the control of mitochondrial shape and protein biogenesis and may function in phospholipid exchange. MDM10 is involved in the late assembly steps of the general translocase of the mitochondrial outer membrane (TOM complex). Functions in the TOM40-specific route of the assembly of outer membrane beta-barrel proteins, including the association of TOM40 with the receptor TOM22 and small TOM proteins. Can associate with the SAM(core) complex as well as the MDM12-MMM1 complex, both involved in late steps of the major beta-barrel assembly pathway, that is responsible for biogenesis of all outer membrane beta-barrel proteins. May act as a switch that shuttles between both complexes and channels precursor proteins into the TOM40-specific pathway. Plays a role in mitochondrial morphology and in the inheritance of mitochondria. This Zygosaccharomyces rouxii (strain ATCC 2623 / CBS 732 / NBRC 1130 / NCYC 568 / NRRL Y-229) protein is Mitochondrial distribution and morphology protein 10.